A 604-amino-acid chain; its full sequence is Elongation factor 4 (604 aa).

Positions 7–189 (SRIRNFSIIA…SIVHLVPPPD (183 aa)) constitute a tr-type G domain. Residues 19–24 (DHGKST) and 136–139 (NKID) each bind GTP.

It belongs to the TRAFAC class translation factor GTPase superfamily. Classic translation factor GTPase family. LepA subfamily.

It localises to the cell inner membrane. The catalysed reaction is GTP + H2O = GDP + phosphate + H(+). Required for accurate and efficient protein synthesis under certain stress conditions. May act as a fidelity factor of the translation reaction, by catalyzing a one-codon backward translocation of tRNAs on improperly translocated ribosomes. Back-translocation proceeds from a post-translocation (POST) complex to a pre-translocation (PRE) complex, thus giving elongation factor G a second chance to translocate the tRNAs correctly. Binds to ribosomes in a GTP-dependent manner. The chain is Elongation factor 4 from Gloeothece citriformis (strain PCC 7424) (Cyanothece sp. (strain PCC 7424)).